We begin with the raw amino-acid sequence, 206 residues long: Na(+)-translocating NADH-quinone reductase subunit E (206 aa).

6 helical membrane-spanning segments follow: residues 12-32 (AVFV…FIAI), 36-56 (IQTA…TVPV), 85-105 (FLGL…LEMT), 118-138 (GIFL…LFMV), 148-168 (VVYG…LAGI), and 184-204 (LGIT…FSGV).

The protein belongs to the NqrDE/RnfAE family. As to quaternary structure, composed of six subunits; NqrA, NqrB, NqrC, NqrD, NqrE and NqrF.

The protein localises to the cell inner membrane. The catalysed reaction is a ubiquinone + n Na(+)(in) + NADH + H(+) = a ubiquinol + n Na(+)(out) + NAD(+). In terms of biological role, NQR complex catalyzes the reduction of ubiquinone-1 to ubiquinol by two successive reactions, coupled with the transport of Na(+) ions from the cytoplasm to the periplasm. NqrA to NqrE are probably involved in the second step, the conversion of ubisemiquinone to ubiquinol. The sequence is that of Na(+)-translocating NADH-quinone reductase subunit E from Alcanivorax borkumensis (strain ATCC 700651 / DSM 11573 / NCIMB 13689 / SK2).